The following is a 308-amino-acid chain: uncharacterized protein (308 aa).

7 helical membrane-spanning segments follow: residues Ile-10–Ile-30, Leu-91–Leu-111, Leu-115–Ile-135, Val-178–Met-198, Ile-219–Leu-239, Leu-251–Ile-271, and Ile-288–Phe-308.

It to M.jannaschii MJ0871, MJ1556 and MJ1589.

It localises to the cell membrane. This is an uncharacterized protein from Methanocaldococcus jannaschii (strain ATCC 43067 / DSM 2661 / JAL-1 / JCM 10045 / NBRC 100440) (Methanococcus jannaschii).